Here is a 324-residue protein sequence, read N- to C-terminus: tRNA U34 carboxymethyltransferase (324 aa).

Carboxy-S-adenosyl-L-methionine is bound by residues Lys91, Trp105, Lys110, Gly130, 152 to 154 (DPS), 181 to 182 (IE), Met196, Tyr200, and Arg315.

The protein belongs to the class I-like SAM-binding methyltransferase superfamily. CmoB family. As to quaternary structure, homotetramer.

It carries out the reaction carboxy-S-adenosyl-L-methionine + 5-hydroxyuridine(34) in tRNA = 5-carboxymethoxyuridine(34) in tRNA + S-adenosyl-L-homocysteine + H(+). Functionally, catalyzes carboxymethyl transfer from carboxy-S-adenosyl-L-methionine (Cx-SAM) to 5-hydroxyuridine (ho5U) to form 5-carboxymethoxyuridine (cmo5U) at position 34 in tRNAs. In Aliivibrio salmonicida (strain LFI1238) (Vibrio salmonicida (strain LFI1238)), this protein is tRNA U34 carboxymethyltransferase.